We begin with the raw amino-acid sequence, 989 residues long: Envelope glycoprotein gp160 (989 aa).

Residues 1–106 form the signal peptide; it reads MTSKESKPSR…CLMWEMRKGN (106 aa). Residues 107–838 lie on the Extracellular side of the membrane; that stretch reads QCQAEEVIAL…WSSWFSWLKY (732 aa). Asn140, Asn161, Asn206, Asn258, Asn298, Asn364, Asn381, Asn387, Asn403, Asn435, Asn439, Asn470, Asn475, Asn481, Asn491, Asn501, Asn515, Asn527, Asn537, Asn542, Asn543, Asn551, and Asn568 each carry an N-linked (GlcNAc...) asparagine; by host glycan. Positions 663–683 are fusion peptide; it reads GIGLVIVLAIMAIIAAAGAGL. A coiled-coil region spans residues 695-745; that stretch reads RTAVQSLANATAAQQEVLEASYAMVQHIAKGIRILEARVARVEALVDRMMV. Residue Asn703 is glycosylated (N-linked (GlcNAc...) asparagine; by host). Residues 729–745 form an immunosuppression region; the sequence is LEARVARVEALVDRMMV. Asn771, Asn778, Asn794, and Asn828 each carry an N-linked (GlcNAc...) asparagine; by host glycan. The stretch at 786 to 821 forms a coiled coil; that stretch reads EEIEQHEGNLSLLLREAALQVHIAQRDARRIPDAWK. The helical transmembrane segment at 839–859 threads the bilayer; the sequence is IPWIIMGIVGLICFRILMCVI. Residues 860 to 989 lie on the Cytoplasmic side of the membrane; sequence SMCLQAYKQV…PTLENDYVEL (130 aa). Residue Cys862 is the site of S-palmitoyl cysteine; by host attachment.

In terms of assembly, the mature envelope protein (Env) consists of a trimer of SU-TM heterodimers attached by noncovalent interactions or by a labile interchain disulfide bond. In terms of processing, specific enzymatic cleavages in vivo yield mature proteins. Envelope glycoproteins are synthesized as an inactive precursor that is N-glycosylated and processed likely by host cell furin or by a furin-like protease in the Golgi to yield the mature SU and TM proteins. The cleavage site between SU and TM requires the minimal sequence [KR]-X-[KR]-R. The transmembrane protein is palmitoylated.

It localises to the virion membrane. Its subcellular location is the host cell membrane. In terms of biological role, the surface protein (SU) attaches the virus to the host cell by binding to its receptor. This interaction triggers the refolding of the transmembrane protein (TM) and is thought to activate its fusogenic potential by unmasking its fusion peptide. Fusion occurs at the host cell plasma membrane. Its function is as follows. The transmembrane protein (TM) acts as a class I viral fusion protein. Under the current model, the protein has at least 3 conformational states: pre-fusion native state, pre-hairpin intermediate state, and post-fusion hairpin state. During viral and target cell membrane fusion, the coiled coil regions (heptad repeats) assume a trimer-of-hairpins structure, positioning the fusion peptide in close proximity to the C-terminal region of the ectodomain. The formation of this structure appears to drive apposition and subsequent fusion of viral and target cell membranes. Membranes fusion leads to delivery of the nucleocapsid into the cytoplasm. The sequence is that of Envelope glycoprotein gp160 (env) from Ovis aries (Sheep).